The sequence spans 202 residues: Glycerol-3-phosphate acyltransferase (202 aa).

The next 6 helical transmembrane spans lie at 2–22 (MIVL…GVII), 54–74 (FVVT…PLLF), 85–105 (FFTN…YPIF), 118–138 (AGVV…IFFL), 140–160 (LYLT…CVIG), and 162–182 (LIIH…LLIF).

Belongs to the PlsY family. As to quaternary structure, probably interacts with PlsX.

It localises to the cell membrane. It catalyses the reaction an acyl phosphate + sn-glycerol 3-phosphate = a 1-acyl-sn-glycero-3-phosphate + phosphate. The protein operates within lipid metabolism; phospholipid metabolism. Its function is as follows. Catalyzes the transfer of an acyl group from acyl-phosphate (acyl-PO(4)) to glycerol-3-phosphate (G3P) to form lysophosphatidic acid (LPA). This enzyme utilizes acyl-phosphate as fatty acyl donor, but not acyl-CoA or acyl-ACP. The protein is Glycerol-3-phosphate acyltransferase of Staphylococcus carnosus (strain TM300).